The sequence spans 1268 residues: uncharacterized protein (1268 aa).

Residues 191–206 (KIVSVKPSKSSQQVDV) show a composition bias toward low complexity. Disordered regions lie at residues 191-235 (KIVS…SKKK) and 253-273 (NCRS…SKGC). The segment covering 223–235 (RKPEKSSQDSKKK) has biased composition (basic and acidic residues). A CCHC-type zinc finger spans residues 239–256 (PTCFYCNKKGHYATNCRS). One can recognise a Reverse transcriptase domain in the interval 465–644 (EMGVIVPITY…KQVTFLGFVD (180 aa)). In terms of domain architecture, Integrase catalytic spans 844 to 997 (VPEAPWKRIH…TPAECHFGRK (154 aa)). The tract at residues 1092 to 1268 (GDYSRSSVNP…RRERVRTTWR (177 aa)) is disordered. 2 stretches are compositionally biased toward polar residues: residues 1127–1143 (VTSN…SRIT) and 1160–1169 (GSCSPTNNDV). The segment covering 1208 to 1221 (PSTSTGTPRGSTST) has biased composition (low complexity). Residues 1222–1249 (QLGQASTRNGSRYTASGRNPSCQGNRYS) are compositionally biased toward polar residues. Residues 1257–1268 (TARRERVRTTWR) are compositionally biased toward basic and acidic residues.

This is an uncharacterized protein from Caenorhabditis elegans.